Consider the following 867-residue polypeptide: DNA mismatch repair protein MutS (867 aa).

609-616 (GPNMSGKS) lines the ATP pocket.

The protein belongs to the DNA mismatch repair MutS family.

Its function is as follows. This protein is involved in the repair of mismatches in DNA. It is possible that it carries out the mismatch recognition step. This protein has a weak ATPase activity. The chain is DNA mismatch repair protein MutS from Latilactobacillus sakei subsp. sakei (strain 23K) (Lactobacillus sakei subsp. sakei).